The primary structure comprises 54 residues: Large ribosomal subunit protein bL33 (54 aa).

It belongs to the bacterial ribosomal protein bL33 family.

The sequence is that of Large ribosomal subunit protein bL33 from Petrotoga mobilis (strain DSM 10674 / SJ95).